We begin with the raw amino-acid sequence, 287 residues long: Fructose-bisphosphate aldolase (287 aa).

Ser50 contacts D-glyceraldehyde 3-phosphate. The active-site Proton donor is the Asp85. Positions 86, 107, 137, and 181 each coordinate Zn(2+). Position 182 (Gly182) interacts with dihydroxyacetone phosphate. His209 provides a ligand contact to Zn(2+). Residues 210–212 (GGT) and 231–234 (NVNT) contribute to the dihydroxyacetone phosphate site. 2 positions are modified to phosphothreonine: Thr212 and Thr234.

This sequence belongs to the class II fructose-bisphosphate aldolase family. The cofactor is Zn(2+).

It catalyses the reaction beta-D-fructose 1,6-bisphosphate = D-glyceraldehyde 3-phosphate + dihydroxyacetone phosphate. Its pathway is carbohydrate degradation; glycolysis; D-glyceraldehyde 3-phosphate and glycerone phosphate from D-glucose: step 4/4. Functionally, catalyzes the aldol condensation of dihydroxyacetone phosphate (DHAP or glycerone-phosphate) with glyceraldehyde 3-phosphate (G3P) to form fructose 1,6-bisphosphate (FBP) in gluconeogenesis and the reverse reaction in glycolysis. The protein is Fructose-bisphosphate aldolase (fba) of Geobacillus stearothermophilus (Bacillus stearothermophilus).